Consider the following 207-residue polypeptide: Large ribosomal subunit protein uL4 (207 aa).

The tract at residues 50–76 (AVKNRSAVSGGGRKPWKQKGTGRARQG) is disordered.

Belongs to the universal ribosomal protein uL4 family. As to quaternary structure, part of the 50S ribosomal subunit.

Functionally, one of the primary rRNA binding proteins, this protein initially binds near the 5'-end of the 23S rRNA. It is important during the early stages of 50S assembly. It makes multiple contacts with different domains of the 23S rRNA in the assembled 50S subunit and ribosome. Forms part of the polypeptide exit tunnel. This chain is Large ribosomal subunit protein uL4, found in Macrococcus caseolyticus (strain JCSC5402) (Macrococcoides caseolyticum).